Consider the following 204-residue polypeptide: N-(5'-phosphoribosyl)anthranilate isomerase (204 aa).

It belongs to the TrpF family.

The catalysed reaction is N-(5-phospho-beta-D-ribosyl)anthranilate = 1-(2-carboxyphenylamino)-1-deoxy-D-ribulose 5-phosphate. It participates in amino-acid biosynthesis; L-tryptophan biosynthesis; L-tryptophan from chorismate: step 3/5. This Bacillus cereus (strain AH820) protein is N-(5'-phosphoribosyl)anthranilate isomerase.